The sequence spans 223 residues: MPARQSFKDLKDLILCDIGNTRIHFAQNYQLFSSAKEDLKRLGIQKEIFYISVNEENEKALLNCYPNAKNIAGFFHLETDYIGLGIDRQMACLAVVNGVIVDAGSAITIDLVKEGKHLGGCILPGLAQYVHAYKKSAKILEQPFKALDSLEVLPKNTRDAVNYGMILSIISCIQHLAKDQKIYLCGGDAKYLSAFLPHSVCKERLVFDGMEIALKKAGILECK.

17–24 (DIGNTRIH) contacts ATP. Residues Y81 and 85–88 (GIDR) contribute to the substrate site. Catalysis depends on D87, which acts as the Proton acceptor. D102 lines the K(+) pocket. S105 lines the ATP pocket. Position 157 (T157) interacts with substrate.

This sequence belongs to the type III pantothenate kinase family. As to quaternary structure, homodimer. NH4(+) is required as a cofactor. Requires K(+) as cofactor.

The protein resides in the cytoplasm. It carries out the reaction (R)-pantothenate + ATP = (R)-4'-phosphopantothenate + ADP + H(+). It participates in cofactor biosynthesis; coenzyme A biosynthesis; CoA from (R)-pantothenate: step 1/5. Functionally, catalyzes the phosphorylation of pantothenate (Pan), the first step in CoA biosynthesis. The protein is Type III pantothenate kinase of Helicobacter pylori (strain J99 / ATCC 700824) (Campylobacter pylori J99).